Here is a 153-residue protein sequence, read N- to C-terminus: Transcriptional repressor NrdR (153 aa).

The segment at 3–34 is a zinc-finger region; it reads CPYCGHPDTRVVDSRPSDEGMAIRRRRECPSC. In terms of domain architecture, ATP-cone spans 49 to 136; the sequence is LMVVKRDGRK…VYREFDSVER (88 aa).

This sequence belongs to the NrdR family. The cofactor is Zn(2+).

Functionally, negatively regulates transcription of bacterial ribonucleotide reductase nrd genes and operons by binding to NrdR-boxes. The protein is Transcriptional repressor NrdR of Thermus thermophilus (strain ATCC BAA-163 / DSM 7039 / HB27).